The primary structure comprises 465 residues: 23S rRNA (uracil(1939)-C(5))-methyltransferase RlmD (465 aa).

The segment at M1–A22 is disordered. Residues P16–D80 enclose the TRAM domain. Residues C93, C99, C102, and C181 each contribute to the [4Fe-4S] cluster site. S-adenosyl-L-methionine is bound by residues Q289, F318, N323, E339, N367, and D388. C421 acts as the Nucleophile in catalysis.

The protein belongs to the class I-like SAM-binding methyltransferase superfamily. RNA M5U methyltransferase family. RlmD subfamily.

The catalysed reaction is uridine(1939) in 23S rRNA + S-adenosyl-L-methionine = 5-methyluridine(1939) in 23S rRNA + S-adenosyl-L-homocysteine + H(+). Functionally, catalyzes the formation of 5-methyl-uridine at position 1939 (m5U1939) in 23S rRNA. This is 23S rRNA (uracil(1939)-C(5))-methyltransferase RlmD from Burkholderia lata (strain ATCC 17760 / DSM 23089 / LMG 22485 / NCIMB 9086 / R18194 / 383).